Consider the following 78-residue polypeptide: Large ribosomal subunit protein bL28 (78 aa).

This sequence belongs to the bacterial ribosomal protein bL28 family.

This chain is Large ribosomal subunit protein bL28, found in Nostoc sp. (strain PCC 7120 / SAG 25.82 / UTEX 2576).